The primary structure comprises 566 residues: Endoglucanase B (566 aa).

A signal peptide spans 1 to 30 (MKKRRSSKVILSLAIVVALLAAVEPNAALA). The Proton donor role is filled by E177. The active-site Nucleophile is E299.

It belongs to the glycosyl hydrolase 5 (cellulase A) family.

It catalyses the reaction Endohydrolysis of (1-&gt;4)-beta-D-glucosidic linkages in cellulose, lichenin and cereal beta-D-glucans.. The sequence is that of Endoglucanase B (celB) from Paenibacillus lautus (Bacillus lautus).